The sequence spans 370 residues: GTPase Obg (370 aa).

Residues 1-159 (MKFIDEARIE…RMLRLELKVL (159 aa)) form the Obg domain. A disordered region spans residues 127 to 146 (NLHFKSSTNRAPRQKTDGKP). The region spanning 160-334 (ADVGLLGMPN…LCYAIYDYLA (175 aa)) is the OBG-type G domain. GTP contacts are provided by residues 166–173 (GMPNAGKS), 191–195 (FTTLA), 213–216 (DIPG), 284–287 (NKLD), and 315–317 (SAL). Residues serine 173 and threonine 193 each contribute to the Mg(2+) site. Positions 350–370 (ADVRFRDAPPSDGGATSGGDA) are disordered.

This sequence belongs to the TRAFAC class OBG-HflX-like GTPase superfamily. OBG GTPase family. In terms of assembly, monomer. The cofactor is Mg(2+).

It localises to the cytoplasm. Its function is as follows. An essential GTPase which binds GTP, GDP and possibly (p)ppGpp with moderate affinity, with high nucleotide exchange rates and a fairly low GTP hydrolysis rate. Plays a role in control of the cell cycle, stress response, ribosome biogenesis and in those bacteria that undergo differentiation, in morphogenesis control. The sequence is that of GTPase Obg from Burkholderia vietnamiensis (strain G4 / LMG 22486) (Burkholderia cepacia (strain R1808)).